Here is a 272-residue protein sequence, read N- to C-terminus: Putative hydro-lyase BBta_2883 (272 aa).

Belongs to the D-glutamate cyclase family.

The chain is Putative hydro-lyase BBta_2883 from Bradyrhizobium sp. (strain BTAi1 / ATCC BAA-1182).